We begin with the raw amino-acid sequence, 231 residues long: Small ribosomal subunit protein uS3 (231 aa).

Residues 39 to 107 (VREFLKEKLK…PAQINIAEVR (69 aa)) form the KH type-2 domain.

This sequence belongs to the universal ribosomal protein uS3 family. Part of the 30S ribosomal subunit. Forms a tight complex with proteins S10 and S14.

In terms of biological role, binds the lower part of the 30S subunit head. Binds mRNA in the 70S ribosome, positioning it for translation. The chain is Small ribosomal subunit protein uS3 from Colwellia psychrerythraea (strain 34H / ATCC BAA-681) (Vibrio psychroerythus).